The following is a 282-amino-acid chain: MSEPNEVIEEFETYLDLEGKSPHTIRMYTYYVRRYLEWGGDLNAHSALRFLAHLRKNGYSNRSLNLVVQALRAYFRFEGLDDEAERLKPPKVPRSLPKALTREEVKRLLSVIPPTRKRDRLIVLLLYGAGLRVSELCNLKKDDVDLDRGLIVVRGGKGAKDRVVPIPKYLADEIRAYLESRSDESEYLLVEDRRRRKDKLSTRNVWYLLKRYGQKAGVEVTPHKLRHSFATHLLEEGVDIRAIQELLGHSNLSTTQIYTKVTVEHLRKAQEKAKLIEKLMGE.

The 78-residue stretch at 2–79 (SEPNEVIEEF…ALRAYFRFEG (78 aa)) folds into the Core-binding (CB) domain. Residues 95–271 (SLPKALTREE…TVEHLRKAQE (177 aa)) enclose the Tyr recombinase domain. Active-site residues include R132, K157, H223, R226, and H249. The active-site O-(3'-phospho-DNA)-tyrosine intermediate is Y258.

It belongs to the 'phage' integrase family. XerA subfamily.

It is found in the cytoplasm. Functionally, site-specific tyrosine recombinase, which acts by catalyzing the cutting and rejoining of the recombining DNA molecules. This Thermococcus kodakarensis (strain ATCC BAA-918 / JCM 12380 / KOD1) (Pyrococcus kodakaraensis (strain KOD1)) protein is Tyrosine recombinase XerA.